The chain runs to 33 residues: Protamine-1B (33 aa).

Residues 1–33 (PRRRRRRSSSRPIRRRRPRRVSRRRRRGGRRRR) form a disordered region.

In terms of tissue distribution, testis.

The protein localises to the nucleus. It localises to the chromosome. Its function is as follows. Protamines substitute for histones in the chromatin of sperm during the haploid phase of spermatogenesis. They compact sperm DNA into a highly condensed, stable and inactive complex. This chain is Protamine-1B, found in Oncorhynchus mykiss (Rainbow trout).